We begin with the raw amino-acid sequence, 1035 residues long: Condensin complex subunit 3 (1035 aa).

HEAT repeat units follow at residues 113 to 150 (RFVDQFIRHVLRGVESPDKNVRFRVLQLLAVIMDNIGE) and 153 to 191 (ESLFNLLILSLNKRIYDREPTVRIQAVFCLTKFQDEEQT). Ser198 carries the phosphoserine modification. The stretch at 201 to 239 (EENFEATRTLVASIQNDPSAEVRRAAMLNLINDNNTRPY) is one HEAT 3 repeat. A disordered region spans residues 500–536 (EEKIKSKKINRRNETSVDEEDENGTHNDEVNEDEEDD). 2 HEAT repeats span residues 597-635 (ILIASLMDTLITPAVRNTAPNIRELGVKNLGLCCLLDVK) and 827-864 (VQLTFLIDVLKIYAQIEKKEIKKMIITNINAIFLSSEQ). Residues 909–919 (ERSETQTKDEN) are compositionally biased toward basic and acidic residues. Disordered regions lie at residues 909–934 (ERSETQTKDENNTANDQYSSILGNSF) and 959–995 (TTVNISAVDNTTEQSNSRKRTRSEAEQIDTSKNLENM). Composition is skewed to polar residues over residues 920–934 (NTANDQYSSILGNSF) and 959–973 (TTVNISAVDNTTEQS). A Phosphoserine modification is found at Ser933. The residue at position 981 (Ser981) is a Phosphoserine. The segment covering 986-995 (IDTSKNLENM) has biased composition (polar residues). The residue at position 1008 (Ser1008) is a Phosphoserine. Positions 1012–1035 (PDEKSDAMSIDEEDKDSESFSEVC) are disordered.

The protein belongs to the CND3 (condensin subunit 3) family. As to quaternary structure, component of the condensin complex, which contains the SMC2 and SMC4 heterodimer, and three non SMC subunits that probably regulate the complex: BRN1, YCS4 and YCG1/YCS5.

It is found in the nucleus. Its subcellular location is the cytoplasm. It localises to the chromosome. In terms of biological role, regulatory subunit of the condensin complex, a complex required for conversion of interphase chromatin into mitotic-like condense chromosomes. The condensin complex probably introduces positive supercoils into relaxed DNA in the presence of type I topoisomerases and converts nicked DNA into positive knotted forms in the presence of type II topoisomerases. The condensin complex probably also plays a role during interphase. The protein is Condensin complex subunit 3 (YCG1) of Saccharomyces cerevisiae (strain ATCC 204508 / S288c) (Baker's yeast).